A 326-amino-acid polypeptide reads, in one-letter code: MSDRQAAEGPAFWSPAARRGSAGGVGDRRGVEESQAAASEKEDLESTNVSSPLASASDPAAESSPYRPQMVSPASKDTTEDLQNVAGASEGQAPGEQAALPAGQTQVLSEMAKYQAPQRPEDTVMIQSEHTGAIDVLSADLESADLLGDHRKVSPPLMAPPCVWTFAKVKEFKSKLGKEKNSRLVVKRGEVVTIRVPTHPEGKRVCWEFATDDYDIGFGVYFDWTPVTSTDITVQVSDSSEDEEEEEDEEEEIEEPVPVGDVERGSRSSLRGRYGEVMPVYRRDSHRDVQAGSHDYPGEGIYLLKFDNSYSLLRNKTLYFHIYYTS.

The segment at 1–99 (MSDRQAAEGP…EGQAPGEQAA (99 aa)) is disordered. The span at 50-65 (SSPLASASDPAAESSP) shows a compositional bias: low complexity. Residues 160-324 (PPCVWTFAKV…NKTLYFHIYY (165 aa)) form the GOLD domain. At lysine 170 the chain carries N6-acetyllysine. The tract at residues 234-268 (VQVSDSSEDEEEEEDEEEEIEEPVPVGDVERGSRS) is disordered. Acidic residues predominate over residues 239-255 (SSEDEEEEEDEEEEIEE).

This is Protein TMED8 (Tmed8) from Mus musculus (Mouse).